Reading from the N-terminus, the 46-residue chain is Endochitinase 1A (46 aa).

The protein belongs to the glycosyl hydrolase 19 family. Chitinase class I subfamily.

It catalyses the reaction Random endo-hydrolysis of N-acetyl-beta-D-glucosaminide (1-&gt;4)-beta-linkages in chitin and chitodextrins.. In terms of biological role, defense against chitin-containing fungal and bacterial pathogens. This is Endochitinase 1A from Arachis hypogaea (Peanut).